A 169-amino-acid chain; its full sequence is Peptide methionine sulfoxide reductase MsrA (169 aa).

Cysteine 10 is a catalytic residue.

This sequence belongs to the MsrA Met sulfoxide reductase family.

The enzyme catalyses L-methionyl-[protein] + [thioredoxin]-disulfide + H2O = L-methionyl-(S)-S-oxide-[protein] + [thioredoxin]-dithiol. It carries out the reaction [thioredoxin]-disulfide + L-methionine + H2O = L-methionine (S)-S-oxide + [thioredoxin]-dithiol. In terms of biological role, has an important function as a repair enzyme for proteins that have been inactivated by oxidation. Catalyzes the reversible oxidation-reduction of methionine sulfoxide in proteins to methionine. In Streptococcus pyogenes serotype M3 (strain ATCC BAA-595 / MGAS315), this protein is Peptide methionine sulfoxide reductase MsrA.